A 194-amino-acid chain; its full sequence is Interferon alpha (194 aa).

The first 23 residues, 1 to 23 (MALPSSFLVALVALGCNSVCSLG), serve as a signal peptide directing secretion. Cystine bridges form between Cys24–Cys123 and Cys52–Cys166. A glycan (N-linked (GlcNAc...) asparagine) is linked at Asn102.

This sequence belongs to the alpha/beta interferon family.

The protein resides in the secreted. Its function is as follows. Produced by macrophages, IFN-alpha have antiviral activities. Interferon stimulates the production of two enzymes: a protein kinase and an oligoadenylate synthetase. The chain is Interferon alpha from Felis catus (Cat).